Consider the following 329-residue polypeptide: Formimidoylglutamase (329 aa).

Residues His133, Asp159, His161, Asp163, Asp253, and Asp255 each coordinate Mn(2+).

The protein belongs to the arginase family. The cofactor is Mn(2+).

It carries out the reaction N-formimidoyl-L-glutamate + H2O = formamide + L-glutamate. The protein operates within amino-acid degradation; L-histidine degradation into L-glutamate; L-glutamate from N-formimidoyl-L-glutamate (hydrolase route): step 1/1. Catalyzes the conversion of N-formimidoyl-L-glutamate to L-glutamate and formamide. The protein is Formimidoylglutamase of Streptococcus gordonii (strain Challis / ATCC 35105 / BCRC 15272 / CH1 / DL1 / V288).